The sequence spans 119 residues: Large ribosomal subunit protein uL14 (119 aa).

The protein belongs to the universal ribosomal protein uL14 family. In terms of assembly, part of the 50S ribosomal subunit. Forms a cluster with proteins L3 and L19. In the 70S ribosome, L14 and L19 interact and together make contacts with the 16S rRNA in bridges B5 and B8.

Its function is as follows. Binds to 23S rRNA. Forms part of two intersubunit bridges in the 70S ribosome. The sequence is that of Large ribosomal subunit protein uL14 from Ehrlichia canis (strain Jake).